Reading from the N-terminus, the 1030-residue chain is Carbamoyl phosphate synthase arginine-specific large chain (1030 aa).

A carboxyphosphate synthetic domain region spans residues 1–401 (MPKDTSISSI…AIQKAAASLE (401 aa)). ATP contacts are provided by Arg129, Arg169, Gly175, Gly176, Lys208, Ile210, Glu215, Gly241, Val242, His243, Gln284, and Glu298. One can recognise an ATP-grasp 1 domain in the interval 133–327 (RSLMNELKQP…IAKMAAKLAV (195 aa)). Residues Gln284, Glu298, and Asn300 each contribute to the Mg(2+) site. The Mn(2+) site is built by Gln284, Glu298, and Asn300. The oligomerization domain stretch occupies residues 402–548 (LKNIGTHLPE…YSTYFGETDG (147 aa)). The carbamoyl phosphate synthetic domain stretch occupies residues 549–928 (DISRKEKKRA…ALKKIYTRVW (380 aa)). The 189-residue stretch at 675 to 863 (YQLLDELGLK…MIPLATRLLA (189 aa)) folds into the ATP-grasp 2 domain. Residues Arg711, Gln748, Val750, Glu754, Gly779, Val780, His781, Ser782, Gln822, and Glu834 each coordinate ATP. Positions 822, 834, and 836 each coordinate Mg(2+). Gln822, Glu834, and Asn836 together coordinate Mn(2+). An MGS-like domain is found at 925–1027 (TRVWSQKGSI…KDLYKKEVAS (103 aa)). The segment at 929 to 1030 (SQKGSIYLQN…YKKEVASCTQ (102 aa)) is allosteric domain.

The protein belongs to the CarB family. In terms of assembly, composed of two chains; the small (or glutamine) chain promotes the hydrolysis of glutamine to ammonia, which is used by the large (or ammonia) chain to synthesize carbamoyl phosphate. Tetramer of heterodimers (alpha,beta)4. The cofactor is Mg(2+). Mn(2+) serves as cofactor.

The catalysed reaction is hydrogencarbonate + L-glutamine + 2 ATP + H2O = carbamoyl phosphate + L-glutamate + 2 ADP + phosphate + 2 H(+). The enzyme catalyses hydrogencarbonate + NH4(+) + 2 ATP = carbamoyl phosphate + 2 ADP + phosphate + 2 H(+). Its pathway is amino-acid biosynthesis; L-arginine biosynthesis; carbamoyl phosphate from bicarbonate: step 1/1. Large subunit of the glutamine-dependent carbamoyl phosphate synthetase (CPSase). CPSase catalyzes the formation of carbamoyl phosphate from the ammonia moiety of glutamine, carbonate, and phosphate donated by ATP, constituting the first step of the biosynthetic pathway leading to arginine and/or urea. The large subunit (synthetase) binds the substrates ammonia (free or transferred from glutamine from the small subunit), hydrogencarbonate and ATP and carries out an ATP-coupled ligase reaction, activating hydrogencarbonate by forming carboxy phosphate which reacts with ammonia to form carbamoyl phosphate. The chain is Carbamoyl phosphate synthase arginine-specific large chain from Bacillus subtilis (strain 168).